The chain runs to 215 residues: Peptide methionine sulfoxide reductase MsrA (215 aa).

The active site involves Cys57.

The protein belongs to the MsrA Met sulfoxide reductase family.

It catalyses the reaction L-methionyl-[protein] + [thioredoxin]-disulfide + H2O = L-methionyl-(S)-S-oxide-[protein] + [thioredoxin]-dithiol. The catalysed reaction is [thioredoxin]-disulfide + L-methionine + H2O = L-methionine (S)-S-oxide + [thioredoxin]-dithiol. Has an important function as a repair enzyme for proteins that have been inactivated by oxidation. Catalyzes the reversible oxidation-reduction of methionine sulfoxide in proteins to methionine. The polypeptide is Peptide methionine sulfoxide reductase MsrA (Saccharophagus degradans (strain 2-40 / ATCC 43961 / DSM 17024)).